A 187-amino-acid polypeptide reads, in one-letter code: Elongation factor P (187 aa).

It belongs to the elongation factor P family.

Its subcellular location is the cytoplasm. Its pathway is protein biosynthesis; polypeptide chain elongation. Involved in peptide bond synthesis. Stimulates efficient translation and peptide-bond synthesis on native or reconstituted 70S ribosomes in vitro. Probably functions indirectly by altering the affinity of the ribosome for aminoacyl-tRNA, thus increasing their reactivity as acceptors for peptidyl transferase. The protein is Elongation factor P of Helicobacter acinonychis (strain Sheeba).